The primary structure comprises 1386 residues: Restriction of telomere capping protein 1 (1386 aa).

Over residues 31 to 56 the composition is skewed to polar residues; the sequence is LEGNSSASPTPSMNPKQHNKSGTSSS. The tract at residues 31–58 is disordered; that stretch reads LEGNSSASPTPSMNPKQHNKSGTSSSNK. WD repeat units follow at residues 180–227, 234–278, 290–329, and 382–428; these read DHIR…NKPT, SHSD…GGYQ, FHTGPALSLNIHPEKEYVITGGRDQKVCIWNYGDSPTHQN, and NERE…IPKE. Composition is skewed to low complexity over residues 595–606 and 649–663; these read NPSFSNSVSPPF and GNNNSGSNSASVSGN. 5 disordered regions span residues 595–629, 647–691, 844–958, 991–1021, and 1090–1157; these read NPSFSNSVSPPFEQTTKPSLHRSATHNPMIQPPKP, EHGN…IQGY, TSTS…SQFG, ASPIKIGSQHKHEKNTTSGSMSPQNKDSNHR, and SPNY…SRTE. A compositionally biased stretch (polar residues) spans 669-690; the sequence is LNRNHSQSTQGSNVSLSSSIQG. A compositionally biased stretch (low complexity) spans 859–872; the sequence is SNNIELSNANNNGS. 4 stretches are compositionally biased toward polar residues: residues 884–928, 1006–1016, 1090–1121, and 1134–1145; these read SNLN…GSTR, TTSGSMSPQNK, SPNYSDQLHHSYSSTHSSPRPYYNSTTPGSSR, and NKTSYAKQSPVS. Residues 1148–1157 show a composition bias toward basic and acidic residues; the sequence is LMRDEQSRTE. One copy of the WD 5 repeat lies at 1171–1212; the sequence is IEETKVTSVNFGKSELTRAITGNNTGSPNTLYKPWKTEYLLK. The segment at 1338-1381 adopts an RING-type; degenerate zinc-finger fold; that stretch reads CIYCDEPCKGLNIVTSLSCGHRGHFGCLREWFIDQENIVCPGGC.

Belongs to the WD repeat RTC1 family.

The protein localises to the vacuole. In terms of biological role, may be involved in a process influencing telomere capping. This chain is Restriction of telomere capping protein 1 (RTC1), found in Debaryomyces hansenii (strain ATCC 36239 / CBS 767 / BCRC 21394 / JCM 1990 / NBRC 0083 / IGC 2968) (Yeast).